Consider the following 112-residue polypeptide: ATP synthase epsilon chain (112 aa).

This sequence belongs to the ATPase epsilon chain family. In terms of assembly, F-type ATPases have 2 components, CF(1) - the catalytic core - and CF(0) - the membrane proton channel. CF(1) has five subunits: alpha(3), beta(3), gamma(1), delta(1), epsilon(1). CF(0) has three main subunits: a, b and c.

It localises to the cell inner membrane. In terms of biological role, produces ATP from ADP in the presence of a proton gradient across the membrane. This chain is ATP synthase epsilon chain (atpC), found in Rickettsia prowazekii (strain Madrid E).